The sequence spans 833 residues: Leucine--tRNA ligase (833 aa).

Residues 41–52 (PYPSGAGLHVGH) carry the 'HIGH' region motif. Residues 610-614 (KMSKS) carry the 'KMSKS' region motif. Lys613 is an ATP binding site.

The protein belongs to the class-I aminoacyl-tRNA synthetase family.

It is found in the cytoplasm. The enzyme catalyses tRNA(Leu) + L-leucine + ATP = L-leucyl-tRNA(Leu) + AMP + diphosphate. The chain is Leucine--tRNA ligase from Streptococcus pyogenes serotype M12 (strain MGAS2096).